An 865-amino-acid polypeptide reads, in one-letter code: MTRYNPREAEPKWQSAWDACDAFKAIGPSASNNKPKYYVLEMFPYPSGRIHVGHSRNYTMGDVVARYKRARGFDVLHPMGWDAFGLPAENAARDRGVHPGAWTHDNIDAMRGQLQRLGLALDWSREIATCDPSYYRHQQAIFLRLMERGLLHRKTAKVNWDPVDQTVLANEQVIDGRGWRSGALVVQRELDQWFFKITEYADELTDALEELDRWPDKVRTMQSNWIGRSRGAEVSFPLTDSGLAEQFGATIDVFTTRPDTLFGASFLALAPDHPIVKALAADDPEIDRFMHECARMGTTAEEIEKAPKRGVDLGITVRHPFDENWELPVWSANFVLSGYGTGAIFGSPAGDQRDLDFARKYDLAVQPVVLPPEASADTHVIEDEAYTGPGTSYNSRFLDGLSTADALERAITELEARKLGKGATSYRLRDWLVSRQRYWGCPIPVIHCADCGVVPVPEDQLPVVLPEDVTFDHPSNPLERHPTWKNADCPKCGKAGRRETDTLDTFVCSSWYFLRFTSPWSEDTPFLASDAEHWMPVDQYVGGIEHAILHLLYARFFTRALNDAGLMNMKSGEPFAGLFTQGMVTHETYKSADGKWLSPEEVDLRKDGAVEMSTGKPVSVGAIEKMSKSKKNVVDLDAFIESYGADAVRWFVLSDSPPERDVEYTDSGVEGVWRFVQRLWSTVTSLPEGAPGPLTVAADASGPALEIRRAAHKALHAVTDAIEGFRFNSAVAQVHDLVNVLRKYVPSDDAGIAAKTEALGILARIIAPFVPHLAEECWEHLGGEGLVIDAAWPEADPALLVEDSVTLPVQVNGKRRTEVTAPKGAAQDVVQEMVMADQTVQRALEGLTVRKVIVVPDRIVNIVAG.

The 'HIGH' region motif lies at 44–54 (PYPSGRIHVGH). A 'KMSKS' region motif is present at residues 625 to 629 (KMSKS). Lysine 628 contributes to the ATP binding site.

It belongs to the class-I aminoacyl-tRNA synthetase family.

The protein localises to the cytoplasm. The enzyme catalyses tRNA(Leu) + L-leucine + ATP = L-leucyl-tRNA(Leu) + AMP + diphosphate. The sequence is that of Leucine--tRNA ligase from Maricaulis maris (strain MCS10) (Caulobacter maris).